The primary structure comprises 152 residues: Neuropeptide W (152 aa).

Residues 1–32 form the signal peptide; the sequence is MGARGPGPGATARRRLLALLLLLLLLPLPARA. Residues 65-152 constitute a propeptide that is removed on maturation; the sequence is ALRPAAGPLA…LGASSWTSAE (88 aa). Disordered stretches follow at residues 79-108 and 122-152; these read GQDVPPRGPSARNALSPGPAPRDAPLLPPG and SGIPVSAPRSPRARGSEPQPELGASSWTSAE. Positions 96-106 are enriched in pro residues; that stretch reads GPAPRDAPLLP.

The protein belongs to the neuropeptide B/W family.

Its subcellular location is the secreted. In terms of biological role, plays a regulatory role in the organization of neuroendocrine signals accessing the anterior pituitary gland. Stimulates water drinking and food intake. May play a role in the hypothalamic response to stress. The sequence is that of Neuropeptide W (NPW) from Sus scrofa (Pig).